A 393-amino-acid polypeptide reads, in one-letter code: Alpha-1,2 mannosyltransferase KTR1 (393 aa).

Topologically, residues M1–K16 are cytoplasmic. A helical; Signal-anchor for type II membrane protein transmembrane segment spans residues L17 to A34. A stem region region spans residues Q35 to G68. Topologically, residues Q35–G393 are lumenal. Residues P69–G393 are catalytic. N120 carries N-linked (GlcNAc...) asparagine glycosylation. E280 serves as the catalytic Nucleophile.

It belongs to the glycosyltransferase 15 family. Mn(2+) is required as a cofactor. N-glycosylated.

Its subcellular location is the golgi apparatus membrane. Its pathway is protein modification; protein glycosylation. Functionally, mannosyltransferase that transfers a mannose residue from GDP-mannose to a range of acceptors in vitro, forming an alpha-(1-&gt;2)-D-mannosyl-D-mannose linkage. In Saccharomyces cerevisiae (strain ATCC 204508 / S288c) (Baker's yeast), this protein is Alpha-1,2 mannosyltransferase KTR1 (KTR1).